The chain runs to 851 residues: DNA mismatch repair protein MutS (851 aa).

602–609 (GPNMSGKS) provides a ligand contact to ATP.

Belongs to the DNA mismatch repair MutS family.

This protein is involved in the repair of mismatches in DNA. It is possible that it carries out the mismatch recognition step. This protein has a weak ATPase activity. In Streptococcus equi subsp. equi (strain 4047), this protein is DNA mismatch repair protein MutS.